A 378-amino-acid chain; its full sequence is UDP-4-amino-4-deoxy-L-arabinose--oxoglutarate aminotransferase (378 aa).

Lys-182 carries the post-translational modification N6-(pyridoxal phosphate)lysine.

Belongs to the DegT/DnrJ/EryC1 family. ArnB subfamily. Homodimer. Pyridoxal 5'-phosphate serves as cofactor.

The catalysed reaction is UDP-4-amino-4-deoxy-beta-L-arabinose + 2-oxoglutarate = UDP-beta-L-threo-pentopyranos-4-ulose + L-glutamate. It participates in nucleotide-sugar biosynthesis; UDP-4-deoxy-4-formamido-beta-L-arabinose biosynthesis; UDP-4-deoxy-4-formamido-beta-L-arabinose from UDP-alpha-D-glucuronate: step 2/3. Its pathway is bacterial outer membrane biogenesis; lipopolysaccharide biosynthesis. Catalyzes the conversion of UDP-4-keto-arabinose (UDP-Ara4O) to UDP-4-amino-4-deoxy-L-arabinose (UDP-L-Ara4N). The modified arabinose is attached to lipid A and is required for resistance to polymyxin and cationic antimicrobial peptides. The polypeptide is UDP-4-amino-4-deoxy-L-arabinose--oxoglutarate aminotransferase (Aeromonas hydrophila subsp. hydrophila (strain ATCC 7966 / DSM 30187 / BCRC 13018 / CCUG 14551 / JCM 1027 / KCTC 2358 / NCIMB 9240 / NCTC 8049)).